Consider the following 134-residue polypeptide: Prolactin (134 aa).

Residues cysteine 126 and cysteine 134 are joined by a disulfide bond.

This sequence belongs to the somatotropin/prolactin family.

It localises to the secreted. In Bufo japonicus (Japanese common toad), this protein is Prolactin.